A 155-amino-acid polypeptide reads, in one-letter code: Transcriptional repressor NrdR (155 aa).

A zinc finger lies at 3 to 34 (CPFCNQTDTKVIDSRLVADGVQVRRRRECQAC). The ATP-cone domain occupies 49–139 (PKVIKQDGTR…VYRSFQDISE (91 aa)).

This sequence belongs to the NrdR family. Zn(2+) is required as a cofactor.

Negatively regulates transcription of bacterial ribonucleotide reductase nrd genes and operons by binding to NrdR-boxes. This chain is Transcriptional repressor NrdR, found in Teredinibacter turnerae (strain ATCC 39867 / T7901).